We begin with the raw amino-acid sequence, 213 residues long: Adenylate kinase (213 aa).

10–15 is an ATP binding site; the sequence is GAGKGT. The NMP stretch occupies residues 30–59; sequence STGDMFRAAMANQTEMGVLAKSYIDKGDLV. Residues threonine 31, arginine 36, 57–59, 86–89, and glutamine 93 each bind AMP; these read DLV and GYPR. Residues 127–160 form an LID region; it reads GRIINKKTGETFHKIFNPPVGDYKEEDFYQREDD. Residues arginine 128 and 137 to 138 each bind ATP; that span reads TF. AMP contacts are provided by arginine 157 and arginine 168. Lysine 196 lines the ATP pocket.

It belongs to the adenylate kinase family. In terms of assembly, monomer.

It is found in the cytoplasm. It carries out the reaction AMP + ATP = 2 ADP. It participates in purine metabolism; AMP biosynthesis via salvage pathway; AMP from ADP: step 1/1. Functionally, catalyzes the reversible transfer of the terminal phosphate group between ATP and AMP. Plays an important role in cellular energy homeostasis and in adenine nucleotide metabolism. In Streptococcus equi subsp. zooepidemicus (strain H70), this protein is Adenylate kinase.